A 367-amino-acid chain; its full sequence is MSTDFVFTPNFSTGFSCLKSDVVIHIAQWQYWWWFWFTYLWSLYFFFISRSIRARTFKMRPKIYTSFRSHGKWGDFLACIVPVIWCFNILVNSNFILRLMEWQNESTIFTSCIRARQWYWIYKFELKNILDLLTVPKKVGWNKWLIHTGNSIEVADDYFYALRIRAQNSWTSKYWKTFVRSLKKFKVSNNIHFIDDVVTAKKFKASVLSFMPYNQFDDKTLGFNLAKTNDSTVLLENDIFCDNFLFKGGDSWLCESIVFNHFGKKKIGGKKSDTLFNALNKTMFLNRKFFKNFLYDIDALVSNAFLEKKPKYVNLTTKRTDYGDFSRFTKKRVFEKRPILITKAFFPLNMEAFDNEILNVSFDATVT.

The protein resides in the mitochondrion. This is an uncharacterized protein from Paramecium tetraurelia.